The chain runs to 516 residues: Cyclic AMP response element-binding protein A (516 aa).

3 positions are modified to phosphoserine: serine 75, serine 79, and serine 82. 3 disordered regions span residues 213 to 237, 294 to 338, and 353 to 408; these read KDEPMSPDSSCPASPTSQASSSQHQ, KSEK…HLFA, and PAGG…KGST. Residues 221–237 show a composition bias toward low complexity; sequence SSCPASPTSQASSSQHQ. Over residues 361-392 the composition is skewed to low complexity; it reads RVSRTAASITRSSSGSASASGSSTSSTVTTTR. One can recognise a bZIP domain in the interval 441–504; sequence SLKKIRRKIK…ANLLSQLHKL (64 aa). The interval 443–463 is basic motif; it reads KKIRRKIKNKISAQESRRKKK. Residues 469–476 are leucine-zipper; the sequence is LERRVEIL.

It belongs to the bZIP family. In terms of assembly, may bind DNA as heterodimers with other bZIP proteins. In all cell types examined, including developing salivary gland in embryos and in adults, brain and optic lobe cell bodies, salivary gland, midgut epithelial cells of the cardia, female ovarian columnar follicle cells and male seminal vesicle, ejaculatory duct, and ejaculatory bulb.

The protein localises to the nucleus. Functionally, transcriptional activator. Binds to fat body-specific enhancers of alcohol dehydrogenase (ADH) and yolk protein genes. BBF-2 may play a role in fat body gene expression. It binds the consensus sequence 5'-T[AC]NACGTAN[TG]C-3'. The chain is Cyclic AMP response element-binding protein A (CrebA) from Drosophila melanogaster (Fruit fly).